A 576-amino-acid polypeptide reads, in one-letter code: Arginine--tRNA ligase (576 aa).

The short motif at 122–132 is the 'HIGH' region element; the sequence is PNVAKQMHVGH.

Belongs to the class-I aminoacyl-tRNA synthetase family. In terms of assembly, monomer.

It localises to the cytoplasm. The enzyme catalyses tRNA(Arg) + L-arginine + ATP = L-arginyl-tRNA(Arg) + AMP + diphosphate. The polypeptide is Arginine--tRNA ligase (Photorhabdus laumondii subsp. laumondii (strain DSM 15139 / CIP 105565 / TT01) (Photorhabdus luminescens subsp. laumondii)).